The chain runs to 297 residues: Elongation factor Ts (297 aa).

The involved in Mg(2+) ion dislocation from EF-Tu stretch occupies residues 82–85 (TDFV). A compositionally biased stretch (low complexity) spans 223–265 (AQTAAAAETAPPEVSEPEPAAAVTAEEPTPEPVAAAEQPAEPV). Positions 223–297 (AQTAAAAETA…GKSRSNKKKK (75 aa)) are disordered. The segment covering 286-297 (SGGKSRSNKKKK) has biased composition (basic residues).

This sequence belongs to the EF-Ts family.

The protein resides in the cytoplasm. Associates with the EF-Tu.GDP complex and induces the exchange of GDP to GTP. It remains bound to the aminoacyl-tRNA.EF-Tu.GTP complex up to the GTP hydrolysis stage on the ribosome. The chain is Elongation factor Ts from Thermosynechococcus vestitus (strain NIES-2133 / IAM M-273 / BP-1).